A 382-amino-acid polypeptide reads, in one-letter code: Mannitol-1-phosphate 5-dehydrogenase (382 aa).

3 to 14 (ALHFGAGNIGRG) is an NAD(+) binding site. Position 269 is an N6-acetyllysine (lysine 269).

It belongs to the mannitol dehydrogenase family.

The catalysed reaction is D-mannitol 1-phosphate + NAD(+) = beta-D-fructose 6-phosphate + NADH + H(+). In Escherichia coli (strain K12 / MC4100 / BW2952), this protein is Mannitol-1-phosphate 5-dehydrogenase.